Reading from the N-terminus, the 491-residue chain is MSESNVSWEVVIGLETHVQLGTKSKIFTSASTTFGDDPNTHIDPVVCGLPGTLPVLNKKVLEYAVKAAMALNLNIASHSKFDRKQYFYPDLPKNYQISQFDEPIAEDGWIEVEVAEKGKETYVKKIGIERLHMEEDAGKLVHAGSDQLSGSTHSLVDYNRAGVALAEIVSKPDLRTGREAAEYAAEVRRIMRYLGVSDGNMQEGSLRCDVNISVRPTINDPFGTKVEIKNMNSFSAIQKACEYEIKRQIKAYESGEEVKQETRLWDEGKQLTKSMRSKEGSSDYRYFPDPDLGPIEVSNELKEKWRSELPELPAAKRNRYSTELGLSIYDARVLTDESSMATYFEKVVNEGGAAKSSANWITGDLAAYINSNRLTFDQLHFQPSELAEMLKMIDTGEISGKIAKEILPELLSKGGSPKQLVQERGLGMIGDPKVIEEIIDQLILKHPNEVESFRSGKKKLLGFFVGQLMKETKGKADPKLANQILNKKLQG.

This sequence belongs to the GatB/GatE family. GatB subfamily. In terms of assembly, heterotrimer of A, B and C subunits.

It carries out the reaction L-glutamyl-tRNA(Gln) + L-glutamine + ATP + H2O = L-glutaminyl-tRNA(Gln) + L-glutamate + ADP + phosphate + H(+). It catalyses the reaction L-aspartyl-tRNA(Asn) + L-glutamine + ATP + H2O = L-asparaginyl-tRNA(Asn) + L-glutamate + ADP + phosphate + 2 H(+). In terms of biological role, allows the formation of correctly charged Asn-tRNA(Asn) or Gln-tRNA(Gln) through the transamidation of misacylated Asp-tRNA(Asn) or Glu-tRNA(Gln) in organisms which lack either or both of asparaginyl-tRNA or glutaminyl-tRNA synthetases. The reaction takes place in the presence of glutamine and ATP through an activated phospho-Asp-tRNA(Asn) or phospho-Glu-tRNA(Gln). The polypeptide is Aspartyl/glutamyl-tRNA(Asn/Gln) amidotransferase subunit B (Prochlorococcus marinus (strain NATL1A)).